Here is a 176-residue protein sequence, read N- to C-terminus: Acireductone dioxygenase (176 aa).

The Fe(2+) site is built by His-91, His-93, Glu-97, and His-136. His-91, His-93, Glu-97, and His-136 together coordinate Ni(2+).

It belongs to the acireductone dioxygenase (ARD) family. Monomer. Fe(2+) serves as cofactor. The cofactor is Ni(2+).

It catalyses the reaction 1,2-dihydroxy-5-(methylsulfanyl)pent-1-en-3-one + O2 = 3-(methylsulfanyl)propanoate + CO + formate + 2 H(+). The enzyme catalyses 1,2-dihydroxy-5-(methylsulfanyl)pent-1-en-3-one + O2 = 4-methylsulfanyl-2-oxobutanoate + formate + 2 H(+). Its pathway is amino-acid biosynthesis; L-methionine biosynthesis via salvage pathway; L-methionine from S-methyl-5-thio-alpha-D-ribose 1-phosphate: step 5/6. Catalyzes 2 different reactions between oxygen and the acireductone 1,2-dihydroxy-3-keto-5-methylthiopentene (DHK-MTPene) depending upon the metal bound in the active site. Fe-containing acireductone dioxygenase (Fe-ARD) produces formate and 2-keto-4-methylthiobutyrate (KMTB), the alpha-ketoacid precursor of methionine in the methionine recycle pathway. Ni-containing acireductone dioxygenase (Ni-ARD) produces methylthiopropionate, carbon monoxide and formate, and does not lie on the methionine recycle pathway. The chain is Acireductone dioxygenase from Picosynechococcus sp. (strain ATCC 27264 / PCC 7002 / PR-6) (Agmenellum quadruplicatum).